We begin with the raw amino-acid sequence, 329 residues long: Phosphate acetyltransferase (329 aa).

This sequence belongs to the phosphate acetyltransferase and butyryltransferase family.

It localises to the cytoplasm. The enzyme catalyses acetyl-CoA + phosphate = acetyl phosphate + CoA. The protein operates within metabolic intermediate biosynthesis; acetyl-CoA biosynthesis; acetyl-CoA from acetate: step 2/2. The polypeptide is Phosphate acetyltransferase (pta) (Staphylococcus epidermidis (strain ATCC 12228 / FDA PCI 1200)).